The chain runs to 362 residues: Phosphoserine aminotransferase (362 aa).

The L-glutamate site is built by S9 and R42. Residues 76–77 (GR), W102, T153, D174, and Q197 each bind pyridoxal 5'-phosphate. K198 is modified (N6-(pyridoxal phosphate)lysine). Pyridoxal 5'-phosphate is bound at residue 239–240 (NT).

This sequence belongs to the class-V pyridoxal-phosphate-dependent aminotransferase family. SerC subfamily. In terms of assembly, homodimer. Requires pyridoxal 5'-phosphate as cofactor.

It is found in the cytoplasm. It catalyses the reaction O-phospho-L-serine + 2-oxoglutarate = 3-phosphooxypyruvate + L-glutamate. The enzyme catalyses 4-(phosphooxy)-L-threonine + 2-oxoglutarate = (R)-3-hydroxy-2-oxo-4-phosphooxybutanoate + L-glutamate. The protein operates within amino-acid biosynthesis; L-serine biosynthesis; L-serine from 3-phospho-D-glycerate: step 2/3. It participates in cofactor biosynthesis; pyridoxine 5'-phosphate biosynthesis; pyridoxine 5'-phosphate from D-erythrose 4-phosphate: step 3/5. Catalyzes the reversible conversion of 3-phosphohydroxypyruvate to phosphoserine and of 3-hydroxy-2-oxo-4-phosphonooxybutanoate to phosphohydroxythreonine. This Escherichia fergusonii (strain ATCC 35469 / DSM 13698 / CCUG 18766 / IAM 14443 / JCM 21226 / LMG 7866 / NBRC 102419 / NCTC 12128 / CDC 0568-73) protein is Phosphoserine aminotransferase.